Reading from the N-terminus, the 194-residue chain is Large ribosomal subunit protein eL15 (194 aa).

A disordered region spans residues 158–194 (ANRGLTSAGKKGRGLMYKGKGAEKARPGVRANGKKTK).

The protein belongs to the eukaryotic ribosomal protein eL15 family.

This is Large ribosomal subunit protein eL15 from Methanococcus maripaludis (strain DSM 14266 / JCM 13030 / NBRC 101832 / S2 / LL).